We begin with the raw amino-acid sequence, 388 residues long: Integrase (388 aa).

The 82-residue stretch at 70–151 (YTVADAVNDW…CLNRAVKRAM (82 aa)) folds into the Core-binding (CB) domain. The 207-residue stretch at 173–379 (RPSKALTFAQ…VIQTGAVVMD (207 aa)) folds into the Tyr recombinase domain. Catalysis depends on residues arginine 208, lysine 249, arginine 330, and histidine 353. The active-site O-(3'-phospho-DNA)-tyrosine intermediate is the tyrosine 363.

It belongs to the 'phage' integrase family.

Required for integration of pSAM2. The sequence is that of Integrase (int) from Streptomyces ambofaciens.